Here is an 872-residue protein sequence, read N- to C-terminus: Cadherin-1 (872 aa).

Positions 1-25 are cleaved as a signal peptide; the sequence is MGLKRPWLLGAVVLLTLIQVQGGLA. Residues 26–148 constitute a propeptide that is removed on maturation; it reads EWTQCRMGFS…SETGLKRQKR (123 aa). Cadherin domains follow at residues 148–256, 257–370, 371–481, 482–589, and 605–688; these read RDWV…DPVF, TQSV…PPVF, DPTQ…APIF, LPPV…GPFL, and VFTI…MQCE. Over 149 to 701 the chain is Extracellular; sequence DWVIPPIIVS…AIAGGLGISA (553 aa). N-linked (GlcNAc...) asparagine glycosylation is present at asparagine 209. Residues aspartate 251 and aspartate 282 each coordinate Ca(2+). 4 N-linked (GlcNAc...) asparagine glycosylation sites follow: asparagine 456, asparagine 552, asparagine 631, and asparagine 669. A helical membrane pass occupies residues 702 to 722; sequence IVGILGGILALLLLLLLLLLF. At 723–872 the chain is on the cytoplasmic side; that stretch reads VRRKKVVKEP…LADMYGGDED (150 aa). A disordered region spans residues 739 to 758; it reads ETRDNVFSYDEEGGGEEDQD. The span at 747 to 758 shows a compositional bias: acidic residues; the sequence is YDEEGGGEEDQD.

As to quaternary structure, homodimer. Abundantly expressed in intestine, stomach, liver, kidney, skin and eye. Also expressed in heart, lung, testis, ovary, muscle and brain.

It localises to the cell junction. The protein resides in the adherens junction. The protein localises to the cell membrane. Its subcellular location is the endosome. It is found in the golgi apparatus. It localises to the trans-Golgi network. The protein resides in the cytoplasm. The protein localises to the desmosome. Functionally, cadherins are calcium-dependent cell adhesion proteins. They preferentially interact with themselves in a homophilic manner in connecting cells; cadherins may thus contribute to the sorting of heterogeneous cell types. Promotes organization of radial actin fiber structure and cellular response to contractile forces, via anchoring of radial actin fibers to CDH1 junction complexes at the cell membrane. E-cadherin is a ligand for integrin alpha-E/beta-7. This Xenopus laevis (African clawed frog) protein is Cadherin-1 (cdh1).